We begin with the raw amino-acid sequence, 269 residues long: Undecaprenyl-diphosphatase (269 aa).

8 helical membrane passes run 4–24 (IELWTAVLAGVVQGITEWLPI), 50–70 (LWLHAGTLLAVLLRFGVPYWL), 86–106 (LFAIVATVCTAVVGLPVYKVL), 113–133 (ATGDAVQMAIGGALIVTGLLL), 146–166 (VNVVDAVIVGLGQGFSVIPGI), 186–206 (AVWLSFYLAGPAMLGATALEL), 220–240 (WMVTAIGVSFVVSLICMEVLL), and 246–266 (LDFSKVCLLLGGIALLVPLAA).

The protein belongs to the UppP family.

The protein localises to the cell membrane. The enzyme catalyses di-trans,octa-cis-undecaprenyl diphosphate + H2O = di-trans,octa-cis-undecaprenyl phosphate + phosphate + H(+). Functionally, catalyzes the dephosphorylation of undecaprenyl diphosphate (UPP). This Methanopyrus kandleri (strain AV19 / DSM 6324 / JCM 9639 / NBRC 100938) protein is Undecaprenyl-diphosphatase.